The sequence spans 282 residues: Transcription repressor MYB4 (282 aa).

HTH myb-type domains are found at residues K9–L61 and R62–L116. 2 consecutive DNA-binding regions (H-T-H motif) follow at residues W37–L61 and W89–I112. The segment at R119–P145 is disordered. A compositionally biased stretch (polar residues) spans Q130 to P145.

In terms of assembly, interacts with BHLH12/MYC1 and BHLH42/TT8. Interacts with SAD2. As to expression, widely expressed at low level. Highly expressed in siliques. Weakly expressed in seedlings, young and mature leaves, cauline leaves, stems, flower buds and roots.

The protein localises to the nucleus. Its function is as follows. Transcription repressor involved in regulation of protection against UV. Mediates transcriptional repression of CYP73A5, the gene encoding trans-cinnamate 4-monooxygenase, thereby regulating the accumulation of the UV-protectant compound sinapoylmalate. The sequence is that of Transcription repressor MYB4 (MYB4) from Arabidopsis thaliana (Mouse-ear cress).